The chain runs to 553 residues: Glutamine--tRNA ligase (553 aa).

Residues 34-44 (PEPNGYLHIGH) carry the 'HIGH' region motif. ATP contacts are provided by residues 35-37 (EPN) and 41-47 (HIGHAKS). 2 residues coordinate L-glutamine: Asp68 and Tyr213. Residues Thr232 and 262 to 263 (RL) contribute to the ATP site. The 'KMSKS' region motif lies at 269–273 (LTSKR).

This sequence belongs to the class-I aminoacyl-tRNA synthetase family. Monomer.

The protein resides in the cytoplasm. The catalysed reaction is tRNA(Gln) + L-glutamine + ATP = L-glutaminyl-tRNA(Gln) + AMP + diphosphate. This is Glutamine--tRNA ligase from Psychromonas ingrahamii (strain DSM 17664 / CCUG 51855 / 37).